Consider the following 255-residue polypeptide: D-aminoacyl-tRNA deacylase (255 aa).

Belongs to the DtdA deacylase family. As to quaternary structure, monomer. Zn(2+) serves as cofactor.

It catalyses the reaction a D-aminoacyl-tRNA + H2O = a tRNA + a D-alpha-amino acid + H(+). The enzyme catalyses glycyl-tRNA(Ala) + H2O = tRNA(Ala) + glycine + H(+). D-aminoacyl-tRNA deacylase with broad substrate specificity. By recycling D-aminoacyl-tRNA to D-amino acids and free tRNA molecules, this enzyme counteracts the toxicity associated with the formation of D-aminoacyl-tRNA entities in vivo. In Picrophilus torridus (strain ATCC 700027 / DSM 9790 / JCM 10055 / NBRC 100828 / KAW 2/3), this protein is D-aminoacyl-tRNA deacylase.